The sequence spans 328 residues: NADH-quinone oxidoreductase subunit H (328 aa).

The next 8 membrane-spanning stretches (helical) occupy residues 8 to 28, 81 to 101, 114 to 134, 154 to 174, 186 to 206, 237 to 257, 265 to 285, and 304 to 324; these read VAAI…AVGA, GLFV…FMVI, IGLL…LFAG, LSYE…AGSF, LWFI…GIAV, FFVG…TLFL, LPPI…FILL, and VCLP…LIFS.

It belongs to the complex I subunit 1 family. In terms of assembly, NDH-1 is composed of 14 different subunits. Subunits NuoA, H, J, K, L, M, N constitute the membrane sector of the complex.

Its subcellular location is the cell inner membrane. It carries out the reaction a quinone + NADH + 5 H(+)(in) = a quinol + NAD(+) + 4 H(+)(out). In terms of biological role, NDH-1 shuttles electrons from NADH, via FMN and iron-sulfur (Fe-S) centers, to quinones in the respiratory chain. The immediate electron acceptor for the enzyme in this species is believed to be ubiquinone. Couples the redox reaction to proton translocation (for every two electrons transferred, four hydrogen ions are translocated across the cytoplasmic membrane), and thus conserves the redox energy in a proton gradient. This subunit may bind ubiquinone. The protein is NADH-quinone oxidoreductase subunit H of Chromohalobacter salexigens (strain ATCC BAA-138 / DSM 3043 / CIP 106854 / NCIMB 13768 / 1H11).